Reading from the N-terminus, the 555-residue chain is Glutamine--tRNA ligase (555 aa).

The short motif at 34–44 (PEPNGYLHIGH) is the 'HIGH' region element. Residues 35–37 (EPN) and 41–47 (HIGHAKS) contribute to the ATP site. Positions 67 and 212 each coordinate L-glutamine. Residues Thr231, 261 to 262 (RL), and 269 to 271 (MSK) each bind ATP. The 'KMSKS' region motif lies at 268-272 (VMSKR).

Belongs to the class-I aminoacyl-tRNA synthetase family. In terms of assembly, monomer.

Its subcellular location is the cytoplasm. It catalyses the reaction tRNA(Gln) + L-glutamine + ATP = L-glutaminyl-tRNA(Gln) + AMP + diphosphate. The chain is Glutamine--tRNA ligase from Proteus mirabilis (strain HI4320).